The primary structure comprises 464 residues: tRNA modification GTPase MnmE (464 aa).

Positions 27, 90, and 129 each coordinate (6S)-5-formyl-5,6,7,8-tetrahydrofolate. Positions 222–384 (GVTLVLAGSV…LYDRIRSFIA (163 aa)) constitute a TrmE-type G domain. GTP contacts are provided by residues 232–237 (NVGKSS), 251–257 (SSYAGTT), and 276–279 (DTAG). Position 236 (Ser-236) interacts with Mg(2+). Ser-251 is a K(+) binding site. Thr-257 lines the Mg(2+) pocket. Residue Lys-464 coordinates (6S)-5-formyl-5,6,7,8-tetrahydrofolate.

It belongs to the TRAFAC class TrmE-Era-EngA-EngB-Septin-like GTPase superfamily. TrmE GTPase family. As to quaternary structure, homodimer. Heterotetramer of two MnmE and two MnmG subunits. The cofactor is K(+).

It localises to the cytoplasm. Its function is as follows. Exhibits a very high intrinsic GTPase hydrolysis rate. Involved in the addition of a carboxymethylaminomethyl (cmnm) group at the wobble position (U34) of certain tRNAs, forming tRNA-cmnm(5)s(2)U34. The chain is tRNA modification GTPase MnmE from Borrelia recurrentis (strain A1).